The following is a 926-amino-acid chain: Progesterone receptor (926 aa).

The interval 1–48 is disordered; that stretch reads MTELQAKDPQVLHTSGASPSPPHIGSPLLARLDSGPFQGSQHSDVSSV. Positions 1 to 165 are AF3; mediates transcriptional activation (in isoform B); the sequence is MTELQAKDPQ…PATKGLLSPL (165 aa). The modulating, Pro-Rich stretch occupies residues 1–559; it reads MTELQAKDPQ…YGFDSLPQKI (559 aa). A Glycyl lysine isopeptide (Lys-Gly) (interchain with G-Cter in SUMO) cross-link involves residue lysine 7. A Phosphoserine modification is found at serine 20. The short motif at 56 to 60 is the LXXL motif 1 element; the sequence is LDGLL. Position 82 is a phosphoserine (serine 82). Residues 116 to 120 carry the LXXL motif 1 motif; the sequence is LDSLL. 2 positions are modified to phosphoserine: serine 131 and serine 163. Positions 166–305 are mediates transcriptional transrepression (in isoform A); sequence MSRPEIKAGD…LATTVVDFIH (140 aa). Residues 168 to 256 are disordered; the sequence is RPEIKAGDSS…GTGSGGGVAA (89 aa). The Nuclear localization signal motif lies at 184–188; that stretch reads KVLPK. Residues serine 191 and serine 214 each carry the phosphoserine modification. At serine 294 the chain carries Phosphoserine; by MAPK1. Residues 327–364 are disordered; sequence DSYDGGATAQGPFAPPRGSPSAPSPPVPCGDFPDCTYP. The segment covering 339 to 354 has biased composition (pro residues); it reads FAPPRGSPSAPSPPVP. Serine 345 bears the Phosphoserine; by MAPK mark. Residue lysine 388 forms a Glycyl lysine isopeptide (Lys-Gly) (interchain with G-Cter in SUMO); alternate linkage. A Glycyl lysine isopeptide (Lys-Gly) (interchain with G-Cter in ubiquitin); alternate cross-link involves residue lysine 388. The tract at residues 391–447 is disordered; it reads EEGADAAVRSPRPYLSAGASSSTFPDFPLAPAPQRAPSSRPGEAAVAGGPSSAAVSP. Serine 400 carries the phosphoserine; by CDK2 modification. Over residues 422–447 the composition is skewed to low complexity; the sequence is APQRAPSSRPGEAAVAGGPSSAAVSP. The segment at 453–539 is AF1; mediates transcriptional activation; the sequence is SALECILYKA…VYPPYLNYLR (87 aa). Residue lysine 524 forms a Glycyl lysine isopeptide (Lys-Gly) (interchain with G-Cter in SUMO) linkage. The nuclear receptor DNA-binding region spans 557–632; sequence QKICLICGDE…AGMVLGGRKF (76 aa). 2 NR C4-type zinc fingers span residues 560-580 and 596-615; these read CLIC…CGSC and CAGR…CPAC. Serine 669 carries the phosphoserine modification. In terms of domain architecture, NR LBD spans 672–906; sequence QEIQLVPPLI…EFPEMMSEVI (235 aa). An AF2; mediates transcriptional activation region spans residues 673 to 926; that stretch reads EIQLVPPLIN…MVKPLLFHKK (254 aa). Progesterone is bound at residue arginine 759.

Belongs to the nuclear hormone receptor family. NR3 subfamily. Interacts with SMARD1 and UNC45A. Interacts with CUEDC2; the interaction promotes ubiquitination, decreases sumoylation, and represses transcriptional activity. Interacts with PIAS3; the interaction promotes sumoylation of PR in a hormone-dependent manner, inhibits DNA-binding, and alters nuclear export. Interacts with SP1; the interaction requires ligand-induced phosphorylation on Ser-294 by ERK1/2 MAPK. Interacts with PRMT2. Isoform A interacts with NCOR2. Isoform B (but not isoform A) interacts with NCOA2 and NCOA1. Isoform B (but not isoform A) interacts with KLF9. Post-translationally, phosphorylated on multiple serine sites. Several of these sites are hormone-dependent. Phosphorylation on Ser-294 is highly hormone-dependent and modulates ubiquitination and sumoylation on Lys-388. Phosphorylation on Ser-345 also requires induction by hormone. Basal phosphorylation on Ser-82, Ser-163, Ser-191 and Ser-400 is increased in response to progesterone and can be phosphorylated in vitro by the CDK2-A1 complex. Increased levels of phosphorylation on Ser-400 also in the presence of EGF, heregulin, IGF, PMA and FBS. Phosphorylation at this site by CDK2 is ligand-independent, and increases nuclear translocation and transcriptional activity. Phosphorylation at Ser-163 and Ser-294, but not at Ser-191, is impaired during the G(2)/M phase of the cell cycle. Phosphorylation on Ser-345 by ERK1/2 MAPK is required for interaction with SP1. In terms of processing, sumoylation is hormone-dependent and represses transcriptional activity. Sumoylation on all three sites is enhanced by PIAS3. Desumoylated by SENP1. Sumoylation on Lys-388, the main site of sumoylation, is repressed by ubiquitination on the same site, and modulated by phosphorylation at Ser-294. Ubiquitination is hormone-dependent and represses sumoylation on the same site. Promoted by MAPK-mediated phosphorylation on Ser-294. Ubiquitinated by UBR5, leading to its degradation: UBR5 specifically recognizes and binds ligand-bound PGR when it is not associated with coactivators (NCOAs). In presence of NCOAs, the UBR5-degron is not accessible, preventing its ubiquitination and degradation. Post-translationally, palmitoylated by ZDHHC7 and ZDHHC21. Palmitoylation is required for plasma membrane targeting and for rapid intracellular signaling via ERK and AKT kinases and cAMP generation. As to expression, expression of isoform A and isoform B in mammary epithelial cells is temporally and spatially separated during normal mammary gland development. Isoform A and isoform B are expressed in the pituitary. Isoform A and isoform B are differentially expressed in the ovary and oviduct, and the level of expression is dependent on both the cell type and estrous cycle stage.

The protein localises to the nucleus. The protein resides in the cytoplasm. Its function is as follows. The steroid hormones and their receptors are involved in the regulation of eukaryotic gene expression and affect cellular proliferation and differentiation in target tissues. Depending on the isoform, progesterone receptor functions as a transcriptional activator or repressor. Functionally, ligand-dependent transdominant repressor of steroid hormone receptor transcriptional activity including repression of its isoform B, MR and ER. Transrepressional activity may involve recruitment of corepressor NCOR2. Transcriptional activator of several progesteron-dependent promoters in a variety of cell types. Involved in activation of SRC-dependent MAPK signaling on hormone stimulation. The chain is Progesterone receptor (Pgr) from Mus musculus (Mouse).